Reading from the N-terminus, the 25-residue chain is VATSEPNRYFNPYSYVELIITVDHS.

A Peptidase M12B domain is found at 14–25 (SYVELIITVDHS). E17 serves as a coordination point for Ca(2+).

The protein belongs to the venom metalloproteinase (M12B) family. P-III subfamily. P-IIIa sub-subfamily. As to quaternary structure, monomer. Requires Zn(2+) as cofactor. In terms of processing, N-glycosylated. Contains 16 disulfide bonds. As to expression, expressed by the venom gland.

The protein localises to the secreted. Inhibited by EDTA, EGTA and 1,10-phenanthroline. Addition of Mg(2+) or Ca(2+) increases the casein hydrolysis rate. Snake venom zinc metalloprotease that possesses high hemorrhagic activity (minimum hemorrhagic dose, MHD=0.86 ug) when subcutaneously injected into mice. Has potent fibrinogenolytic activity on alpha-chain of fibrinogen (FGA). Hydrolyzes model substrate (beta-chain of insulin) at Ala(14)-Leu(15) and Tyr(16)-Leu(17) followed by His(10)-Leu(11) and Phe(24)-Phe(25). In Daboia siamensis (Eastern Russel's viper), this protein is Zinc metalloproteinase-disintegrin-like daborhagin-M.